The chain runs to 618 residues: ADP,ATP carrier protein 2, chloroplastic (618 aa).

A chloroplast-targeting transit peptide spans 1–76; that stretch reads MEGLIQTRGI…KERSRGFICK (76 aa). Residue Ala77 is modified to N-acetylalanine. Transmembrane regions (helical) follow at residues 110-130, 148-168, 179-199, 237-257, 270-289, 312-332, 368-388, 401-421, 441-461, 464-484, and 542-562; these read LKKIVPLGLMFFCILFNYTIL, IIPFLKTWVNLPMAIGFMLLY, ALFYTVIVPFIVYFGAFGFVM, LFYVMAELWGSVVVSVLFWGF, FYPLFGLGANVALIFSGRTV, AMMSIVVGMGLAICFLYWWVN, LATLVVAYGISINLVEVTWKS, SAFMGDFSTCTGIATFTMMLL, VLLLTGVAFFSLILFGGPFAP, AKLGMTPLLAAVYVGALQNIF, and LANSTPYLGVILLGIVTAWLA. The segment at 586-618 is disordered; sequence RASSVKIPVVSQEDAPSGETTSQLSEKSTPTGI. The span at 603–618 shows a compositional bias: polar residues; that stretch reads GETTSQLSEKSTPTGI.

It belongs to the ADP/ATP translocase tlc (TC 2.A.12.2) family.

The protein resides in the plastid. It is found in the chloroplast membrane. The sequence is that of ADP,ATP carrier protein 2, chloroplastic (AATP2) from Arabidopsis thaliana (Mouse-ear cress).